Here is a 646-residue protein sequence, read N- to C-terminus: WW domain-containing adapter protein with coiled-coil (646 aa).

The tract at residues 1–138 is disordered; it reads MVMYARKQQR…YDSADDWSEH (138 aa). Residues 23-37 are compositionally biased toward polar residues; that stretch reads QPFQALKYSSKSHPS. Over residues 38 to 50 the composition is skewed to basic and acidic residues; the sequence is SGDHRHEKMRDAA. Phosphoserine is present on Ser53. Residues 61-75 show a composition bias toward polar residues; it reads RSNSPENKYSDSTGH. Residues 103–122 are compositionally biased toward low complexity; the sequence is NHSALHSSNSHSSNPSNNPS. Residues 129–162 form the WW domain; sequence YDSADDWSEHISSSGKKYYYNCRTEVSQWEKPKE. Phosphoserine occurs at positions 131 and 142. 2 stretches are compositionally biased toward basic and acidic residues: residues 158–174 and 182–191; these read EKPK…KEAN and PKDRDYRREV. Disordered stretches follow at residues 158–352 and 428–541; these read EKPK…PQST and TQAQ…TATV. Residues 211–225 are compositionally biased toward polar residues; that stretch reads DASSLLPQNILSQTS. Ser225 is subject to Phosphoserine. Basic and acidic residues predominate over residues 226–239; sequence RHNDKDYRLPRAET. The segment covering 252–267 has biased composition (low complexity); the sequence is PVVHPTATPSTVPSSP. Over residues 284-300 the composition is skewed to polar residues; sequence GASTLSKLPTPTASLPA. Thr293 is subject to Phosphothreonine. Lys302 carries the post-translational modification N6-acetyllysine. Positions 316 to 331 are enriched in polar residues; sequence SHSCTTPSTSSASGLN. The span at 332–351 shows a compositional bias: low complexity; that stretch reads PTSAPPTSASAVPVSPVPQS. The segment covering 428 to 463 has biased composition (polar residues); the sequence is TQAQPSNQSPMSLTSDASSPRSYVSPRISTPQTNTV. At Ser446 the chain carries Phosphoserine. Phosphothreonine is present on Thr471. The span at 490–503 shows a compositional bias: polar residues; sequence VSHSATQQPVTADK. Phosphoserine occurs at positions 511, 523, and 525. A compositionally biased stretch (low complexity) spans 511-524; it reads SPRSLQRLSSQRSP. A compositionally biased stretch (polar residues) spans 528–541; sequence PNHTCSSNASTATV. Residues 617 to 643 adopt a coiled-coil conformation; the sequence is QATLREQRILFLRQQIKELEKLKNQNS.

Interacts (via coiled coil domain) with RNF20, RNF40 and UBE2A. Interacts (via WW domain) with RNA polymerase II. Interacts with MTOR and other components of the MTOR pathway including RPTOR, RUVBL1, RUVBL2, TTI1 and TTI2. Post-translationally, phosphorylated on tyrosine residues.

It localises to the nucleus speckle. Its subcellular location is the nucleus. Functionally, acts as a linker between gene transcription and histone H2B monoubiquitination at 'Lys-120' (H2BK120ub1). Interacts with the RNA polymerase II transcriptional machinery via its WW domain and with RNF20-RNF40 via its coiled coil region, thereby linking and regulating H2BK120ub1 and gene transcription. Regulates the cell-cycle checkpoint activation in response to DNA damage. Positive regulator of amino acid starvation-induced autophagy. Also acts as a negative regulator of basal autophagy. Positively regulates MTOR activity by promoting, in an energy-dependent manner, the assembly of the TTT complex composed of TELO2, TTI1 and TTI2 and the RUVBL complex composed of RUVBL1 and RUVBL2 into the TTT-RUVBL complex. This leads to the dimerization of the mTORC1 complex and its subsequent activation. May negatively regulate the ubiquitin proteasome pathway. The protein is WW domain-containing adapter protein with coiled-coil (Wac) of Mus musculus (Mouse).